Here is a 420-residue protein sequence, read N- to C-terminus: Probable pectate lyase C (420 aa).

The first 20 residues, 1 to 20, serve as a signal peptide directing secretion; it reads MKLSAPLLVSLAAFSQAVTA. N-linked (GlcNAc...) asparagine glycosylation is found at Asn-49, Asn-165, and Asn-202. Arg-205 is an active-site residue. The EF-hand domain occupies 262–297; it reads NANFHGYVDNNYYDPDKDGQLDGSELGVSSSNYGGM. Positions 275, 277, 279, 281, and 286 each coordinate Ca(2+). The interval 357–395 is disordered; the sequence is ATMGGPGTLNGGTPAKDTDGDGIPDEAEKQLGTDPNTND. Asn-394 carries N-linked (GlcNAc...) asparagine glycosylation.

This sequence belongs to the polysaccharide lyase 1 family. Ca(2+) serves as cofactor.

The protein resides in the secreted. It catalyses the reaction Eliminative cleavage of (1-&gt;4)-alpha-D-galacturonan to give oligosaccharides with 4-deoxy-alpha-D-galact-4-enuronosyl groups at their non-reducing ends.. Its function is as follows. Pectinolytic enzyme consist of four classes of enzymes: pectin lyase, polygalacturonase, pectin methylesterase and rhamnogalacturonase. Among pectinolytic enzymes, pectin lyase is the most important in depolymerization of pectin, since it cleaves internal glycosidic bonds of highly methylated pectins. Favors pectate, the anion, over pectin, the methyl ester. This Neosartorya fischeri (strain ATCC 1020 / DSM 3700 / CBS 544.65 / FGSC A1164 / JCM 1740 / NRRL 181 / WB 181) (Aspergillus fischerianus) protein is Probable pectate lyase C (plyC).